We begin with the raw amino-acid sequence, 234 residues long: Segregation and condensation protein A (234 aa).

This sequence belongs to the ScpA family. As to quaternary structure, component of a cohesin-like complex composed of ScpA, ScpB and the Smc homodimer, in which ScpA and ScpB bind to the head domain of Smc. The presence of the three proteins is required for the association of the complex with DNA.

The protein localises to the cytoplasm. Participates in chromosomal partition during cell division. May act via the formation of a condensin-like complex containing Smc and ScpB that pull DNA away from mid-cell into both cell halves. This Streptococcus pyogenes serotype M5 (strain Manfredo) protein is Segregation and condensation protein A.